We begin with the raw amino-acid sequence, 196 residues long: Imidazoleglycerol-phosphate dehydratase (196 aa).

It belongs to the imidazoleglycerol-phosphate dehydratase family.

The protein resides in the cytoplasm. The catalysed reaction is D-erythro-1-(imidazol-4-yl)glycerol 3-phosphate = 3-(imidazol-4-yl)-2-oxopropyl phosphate + H2O. Its pathway is amino-acid biosynthesis; L-histidine biosynthesis; L-histidine from 5-phospho-alpha-D-ribose 1-diphosphate: step 6/9. This chain is Imidazoleglycerol-phosphate dehydratase, found in Desulfitobacterium hafniense (strain Y51).